A 333-amino-acid chain; its full sequence is Aspartate carbamoyltransferase catalytic subunit (333 aa).

Residues R61 and T62 each coordinate carbamoyl phosphate. K89 is an L-aspartate binding site. Residues R111, H144, and Q147 each coordinate carbamoyl phosphate. L-aspartate contacts are provided by R184 and R248. Positions 289 and 290 each coordinate carbamoyl phosphate.

This sequence belongs to the aspartate/ornithine carbamoyltransferase superfamily. ATCase family. As to quaternary structure, heterododecamer (2C3:3R2) of six catalytic PyrB chains organized as two trimers (C3), and six regulatory PyrI chains organized as three dimers (R2).

It carries out the reaction carbamoyl phosphate + L-aspartate = N-carbamoyl-L-aspartate + phosphate + H(+). It participates in pyrimidine metabolism; UMP biosynthesis via de novo pathway; (S)-dihydroorotate from bicarbonate: step 2/3. Its function is as follows. Catalyzes the condensation of carbamoyl phosphate and aspartate to form carbamoyl aspartate and inorganic phosphate, the committed step in the de novo pyrimidine nucleotide biosynthesis pathway. This is Aspartate carbamoyltransferase catalytic subunit from Trichormus variabilis (strain ATCC 29413 / PCC 7937) (Anabaena variabilis).